The sequence spans 379 residues: L-lactate dehydrogenase (379 aa).

The FMN hydroxy acid dehydrogenase domain occupies 1-379 (MIISASTDYR…IGRDSLVSLP (379 aa)). Tyrosine 24 is a substrate binding site. FMN is bound by residues serine 106 and glutamine 127. Residue tyrosine 129 participates in substrate binding. Threonine 155 provides a ligand contact to FMN. Arginine 164 contributes to the substrate binding site. An FMN-binding site is contributed by lysine 251. Histidine 275 functions as the Proton acceptor in the catalytic mechanism. Arginine 278 lines the substrate pocket. 306-330 (DSGIRTGLDVVRMLALGADTVLLGR) serves as a coordination point for FMN.

This sequence belongs to the FMN-dependent alpha-hydroxy acid dehydrogenase family. FMN serves as cofactor.

Its subcellular location is the cell inner membrane. It catalyses the reaction (S)-lactate + A = pyruvate + AH2. Functionally, catalyzes the conversion of L-lactate to pyruvate. Is coupled to the respiratory chain. The polypeptide is L-lactate dehydrogenase (Stenotrophomonas maltophilia (strain K279a)).